The following is a 180-amino-acid chain: MSRIGKLPVKIPEKVKVSVDGNLVKVEGPKGKMSFPTNPRVKVAVDKGEVQVTRPDDSPESKGLHGLTRTLVKNALDGVVKGYERGLEINGVGFKAEVKGKEIHFALGFSHPVVFKLPEGVTAEVDAKQTKLTVKGVDKHVLGLTAAKIRALRPPEPYKGKGIKYAEEIIRRKEGKTGAA.

This sequence belongs to the universal ribosomal protein uL6 family. In terms of assembly, part of the 50S ribosomal subunit.

In terms of biological role, this protein binds to the 23S rRNA, and is important in its secondary structure. It is located near the subunit interface in the base of the L7/L12 stalk, and near the tRNA binding site of the peptidyltransferase center. This Anaeromyxobacter sp. (strain Fw109-5) protein is Large ribosomal subunit protein uL6.